The following is a 462-amino-acid chain: Glutamate--tRNA ligase (462 aa).

The short motif at P11 to N21 is the 'HIGH' region element. The span at K120–P131 shows a compositional bias: basic and acidic residues. The interval K120–A140 is disordered. Positions K243 to R247 match the 'KMSKS' region motif. K246 is an ATP binding site.

The protein belongs to the class-I aminoacyl-tRNA synthetase family. Glutamate--tRNA ligase type 1 subfamily. Monomer.

It localises to the cytoplasm. The enzyme catalyses tRNA(Glu) + L-glutamate + ATP = L-glutamyl-tRNA(Glu) + AMP + diphosphate. Functionally, catalyzes the attachment of glutamate to tRNA(Glu) in a two-step reaction: glutamate is first activated by ATP to form Glu-AMP and then transferred to the acceptor end of tRNA(Glu). This Polaromonas sp. (strain JS666 / ATCC BAA-500) protein is Glutamate--tRNA ligase.